A 126-amino-acid polypeptide reads, in one-letter code: Holo-[acyl-carrier-protein] synthase (126 aa).

Mg(2+) is bound by residues Asp-8 and Glu-50.

It belongs to the P-Pant transferase superfamily. AcpS family. It depends on Mg(2+) as a cofactor.

It localises to the cytoplasm. It carries out the reaction apo-[ACP] + CoA = holo-[ACP] + adenosine 3',5'-bisphosphate + H(+). Functionally, transfers the 4'-phosphopantetheine moiety from coenzyme A to a Ser of acyl-carrier-protein. In Micrococcus luteus (strain ATCC 4698 / DSM 20030 / JCM 1464 / CCM 169 / CCUG 5858 / IAM 1056 / NBRC 3333 / NCIMB 9278 / NCTC 2665 / VKM Ac-2230) (Micrococcus lysodeikticus), this protein is Holo-[acyl-carrier-protein] synthase.